A 270-amino-acid polypeptide reads, in one-letter code: Undecaprenyl-diphosphatase 2 (270 aa).

Helical transmembrane passes span 1–21 (MDLI…FLPV), 39–59 (QGLA…VWYF), 87–107 (WAVI…KGFI), 114–134 (PLVI…SDVV), 147–167 (LSWK…IPGT), 190–210 (FSFL…TLDL), 221–241 (AMGL…HFFL), and 247–267 (VGML…LVLF).

It belongs to the UppP family.

It is found in the cell inner membrane. The enzyme catalyses di-trans,octa-cis-undecaprenyl diphosphate + H2O = di-trans,octa-cis-undecaprenyl phosphate + phosphate + H(+). In terms of biological role, catalyzes the dephosphorylation of undecaprenyl diphosphate (UPP). Confers resistance to bacitracin. This Stutzerimonas stutzeri (strain A1501) (Pseudomonas stutzeri) protein is Undecaprenyl-diphosphatase 2.